The sequence spans 604 residues: Glutamine--fructose-6-phosphate aminotransferase [isomerizing] (604 aa).

Cysteine 2 acts as the Nucleophile; for GATase activity in catalysis. Residues 2–218 (CGIVGVVGNR…DKELVILTKD (217 aa)) form the Glutamine amidotransferase type-2 domain. SIS domains lie at 284–423 (IITS…ANGK) and 456–594 (VQAL…VDKP). The For Fru-6P isomerization activity role is filled by lysine 599.

As to quaternary structure, homodimer.

Its subcellular location is the cytoplasm. It carries out the reaction D-fructose 6-phosphate + L-glutamine = D-glucosamine 6-phosphate + L-glutamate. In terms of biological role, catalyzes the first step in hexosamine metabolism, converting fructose-6P into glucosamine-6P using glutamine as a nitrogen source. The chain is Glutamine--fructose-6-phosphate aminotransferase [isomerizing] from Streptococcus pyogenes serotype M1.